Reading from the N-terminus, the 227-residue chain is UPF0173 metal-dependent hydrolase BCE33L4354 (227 aa).

The protein belongs to the UPF0173 family.

The chain is UPF0173 metal-dependent hydrolase BCE33L4354 from Bacillus cereus (strain ZK / E33L).